The following is a 315-amino-acid chain: Calumenin (315 aa).

The signal sequence occupies residues 1 to 19 (MDTRRLLLCLCLWVACVVS). EF-hand domains follow at residues 68-103 (ESKE…AQKK), 104-139 (YVYD…TYLD), 151-186 (QMMV…EEFD), 188-223 (MKDI…HDGD), 229-264 (WVKT…SDYD), and 265-300 (HAEA…FVGS). Ca(2+) contacts are provided by aspartate 81, aspartate 83, aspartate 85, tyrosine 87, glutamate 92, aspartate 117, asparagine 119, aspartate 121, and glutamate 128. The N-linked (GlcNAc...) asparagine glycan is linked to asparagine 131. 18 residues coordinate Ca(2+): aspartate 164, aspartate 166, aspartate 168, glutamate 175, aspartate 201, asparagine 203, aspartate 205, glutamate 212, aspartate 242, asparagine 244, aspartate 246, lysine 248, glutamate 253, aspartate 278, asparagine 280, aspartate 282, lysine 284, and glutamate 289. The Prevents secretion from ER motif lies at 312 to 315 (HDEF).

It belongs to the CREC family. In terms of assembly, interacts with ggcx.

The protein localises to the endoplasmic reticulum membrane. It is found in the golgi apparatus. The protein resides in the secreted. Its subcellular location is the melanosome. It localises to the sarcoplasmic reticulum lumen. Its function is as follows. Involved in regulation of vitamin K-dependent carboxylation of multiple N-terminal glutamate residues. Seems to inhibit gamma-carboxylase ggcx. Binds 7 calcium ions with a low affinity. This is Calumenin (calu) from Xenopus tropicalis (Western clawed frog).